Consider the following 456-residue polypeptide: Exodeoxyribonuclease 7 large subunit (456 aa).

The protein belongs to the XseA family. Heterooligomer composed of large and small subunits.

It is found in the cytoplasm. It carries out the reaction Exonucleolytic cleavage in either 5'- to 3'- or 3'- to 5'-direction to yield nucleoside 5'-phosphates.. Its function is as follows. Bidirectionally degrades single-stranded DNA into large acid-insoluble oligonucleotides, which are then degraded further into small acid-soluble oligonucleotides. The polypeptide is Exodeoxyribonuclease 7 large subunit (Shigella dysenteriae serotype 1 (strain Sd197)).